The chain runs to 244 residues: Ubiquinone biosynthesis O-methyltransferase (244 aa).

Arginine 36, glycine 60, aspartate 81, and leucine 123 together coordinate S-adenosyl-L-methionine.

This sequence belongs to the methyltransferase superfamily. UbiG/COQ3 family.

It carries out the reaction a 3-demethylubiquinol + S-adenosyl-L-methionine = a ubiquinol + S-adenosyl-L-homocysteine + H(+). The catalysed reaction is a 3-(all-trans-polyprenyl)benzene-1,2-diol + S-adenosyl-L-methionine = a 2-methoxy-6-(all-trans-polyprenyl)phenol + S-adenosyl-L-homocysteine + H(+). It functions in the pathway cofactor biosynthesis; ubiquinone biosynthesis. Functionally, O-methyltransferase that catalyzes the 2 O-methylation steps in the ubiquinone biosynthetic pathway. This chain is Ubiquinone biosynthesis O-methyltransferase, found in Rickettsia felis (strain ATCC VR-1525 / URRWXCal2) (Rickettsia azadi).